We begin with the raw amino-acid sequence, 336 residues long: DNA-directed RNA polymerase subunit alpha (336 aa).

Residues 1 to 238 (MNDLDLNLVP…NLFLPFLQAE (238 aa)) are alpha N-terminal domain (alpha-NTD). Positions 267–336 (AKKVTFQHIF…LQKRFGMRLQ (70 aa)) are alpha C-terminal domain (alpha-CTD).

The protein belongs to the RNA polymerase alpha chain family. In terms of assembly, in plastids the minimal PEP RNA polymerase catalytic core is composed of four subunits: alpha, beta, beta', and beta''. When a (nuclear-encoded) sigma factor is associated with the core the holoenzyme is formed, which can initiate transcription.

The protein resides in the plastid. It localises to the chloroplast. It catalyses the reaction RNA(n) + a ribonucleoside 5'-triphosphate = RNA(n+1) + diphosphate. In terms of biological role, DNA-dependent RNA polymerase catalyzes the transcription of DNA into RNA using the four ribonucleoside triphosphates as substrates. The polypeptide is DNA-directed RNA polymerase subunit alpha (Huperzia lucidula (Shining clubmoss)).